We begin with the raw amino-acid sequence, 833 residues long: EF-hand domain-containing family member B (833 aa).

EF-hand domains follow at residues 561–596 and 597–632; these read QKFD…ANLS and LDDK…KDKM. Ca(2+) contacts are provided by Asp574, Asp578, Met580, Glu585, Asp610, Asp612, Asp614, and Glu621.

As to quaternary structure, microtubule inner protein component of sperm flagellar doublet microtubules. Interacts with STIM1 and ORAI1; the interactions take place upon Ca(2+)-store depletion and dissociate through a Ca(2+)-dependent mechanism. Interaction with STIM1 inhibits STIM1 interaction with SARAF. Expressed in airway epithelial cells.

The protein resides in the cytoplasm. It is found in the cytoskeleton. It localises to the cilium axoneme. Its subcellular location is the flagellum axoneme. Functionally, microtubule inner protein (MIP) part of the dynein-decorated doublet microtubules (DMTs) in cilia axoneme, which is required for motile cilia beating. Cytosolic sensor for calcium, modulates the interaction of STIM1 and ORAI1 upon store depletion and the activation of store-operated Ca(2+) entry (SOCE) and NFAT translocation from cytosol to nucleus. In Homo sapiens (Human), this protein is EF-hand domain-containing family member B.